Here is a 73-residue protein sequence, read N- to C-terminus: ATP synthase subunit c (73 aa).

2 helical membrane-spanning segments follow: residues 4–24 (LAIGAAIAALTGIGAGVGIGI) and 51–71 (GALAEATAIYGLLVAIMIIIF).

It belongs to the ATPase C chain family. As to quaternary structure, F-type ATPases have 2 components, F(1) - the catalytic core - and F(0) - the membrane proton channel. F(1) has five subunits: alpha(3), beta(3), gamma(1), delta(1), epsilon(1). F(0) has three main subunits: a(1), b(2) and c(10-14). The alpha and beta chains form an alternating ring which encloses part of the gamma chain. F(1) is attached to F(0) by a central stalk formed by the gamma and epsilon chains, while a peripheral stalk is formed by the delta and b chains.

Its subcellular location is the cell membrane. In terms of biological role, f(1)F(0) ATP synthase produces ATP from ADP in the presence of a proton or sodium gradient. F-type ATPases consist of two structural domains, F(1) containing the extramembraneous catalytic core and F(0) containing the membrane proton channel, linked together by a central stalk and a peripheral stalk. During catalysis, ATP synthesis in the catalytic domain of F(1) is coupled via a rotary mechanism of the central stalk subunits to proton translocation. Its function is as follows. Key component of the F(0) channel; it plays a direct role in translocation across the membrane. A homomeric c-ring of between 10-14 subunits forms the central stalk rotor element with the F(1) delta and epsilon subunits. The sequence is that of ATP synthase subunit c from Caldanaerobacter subterraneus subsp. tengcongensis (strain DSM 15242 / JCM 11007 / NBRC 100824 / MB4) (Thermoanaerobacter tengcongensis).